We begin with the raw amino-acid sequence, 623 residues long: Replication protein A 70 kDa DNA-binding subunit (623 aa).

The residue at position 1 (Met-1) is an N-acetylmethionine. Residues Lys-22 and Lys-88 each participate in a glycyl lysine isopeptide (Lys-Gly) (interchain with G-Cter in ubiquitin) cross-link. The tract at residues 116–163 is disordered; the sequence is VPYNEGYGQQQQQQQQQQQQAVPSPASAATPPASKPQPQNGSLGMGST. Over residues 124 to 154 the composition is skewed to low complexity; sequence QQQQQQQQQQQQAVPSPASAATPPASKPQPQ. N6-acetyllysine; alternate is present on residues Lys-172 and Lys-176. Residues Lys-172 and Lys-176 each participate in a glycyl lysine isopeptide (Lys-Gly) (interchain with G-Cter in ubiquitin); alternate cross-link. The residue at position 189 (Thr-189) is a Phosphothreonine. A Glycyl lysine isopeptide (Lys-Gly) (interchain with G-Cter in ubiquitin) cross-link involves residue Lys-192. Thr-200 carries the phosphothreonine modification. The OB DNA-binding region spans 206-290; sequence WTICARVTNK…VKNDYEMTFN (85 aa). Residues Lys-229 and Lys-253 each participate in a glycyl lysine isopeptide (Lys-Gly) (interchain with G-Cter in ubiquitin) cross-link. N6-acetyllysine; alternate is present on Lys-268. Residue Lys-268 forms a Glycyl lysine isopeptide (Lys-Gly) (interchain with G-Cter in ubiquitin); alternate linkage. Residues Lys-276 and Lys-340 each participate in a glycyl lysine isopeptide (Lys-Gly) (interchain with G-Cter in ubiquitin) cross-link. Ser-393 carries the post-translational modification Phosphoserine. Lys-419 is covalently cross-linked (Glycyl lysine isopeptide (Lys-Gly) (interchain with G-Cter in ubiquitin)). Lys-458 participates in a covalent cross-link: Glycyl lysine isopeptide (Lys-Gly) (interchain with G-Cter in SUMO). Lys-467 is covalently cross-linked (Glycyl lysine isopeptide (Lys-Gly) (interchain with G-Cter in ubiquitin)). The segment at 490–512 adopts a C4-type zinc-finger fold; sequence CPTQDCNKKVIDQQNGLYRCEKC. A Glycyl lysine isopeptide (Lys-Gly) (interchain with G-Cter in ubiquitin) cross-link involves residue Lys-562. Residue Lys-586 forms a Glycyl lysine isopeptide (Lys-Gly) (interchain with G-Cter in SUMO) linkage.

This sequence belongs to the replication factor A protein 1 family. In terms of assembly, component of the canonical replication protein A complex (RPA), a heterotrimer composed of RPA1, RPA2 and RPA3. The DNA-binding activity may reside exclusively on the RPA1 subunit. Interacts with PRPF19; the PRP19-CDC5L complex is recruited to the sites of DNA repair where it ubiquitinates the replication protein A complex (RPA). Interacts with RIPK1. Interacts with the polymerase alpha subunit POLA1/p180; this interaction stabilizes the replicative complex and reduces the misincorporation rate of DNA polymerase alpha by acting as a fidelity clamp. Interacts with RAD51 and SENP6 to regulate DNA repair. Interacts with HELB; this interaction promotes HELB recruitment to chromatin following DNA damage. Interacts with PRIMPOL; leading to recruit PRIMPOL on chromatin and stimulate its DNA primase activity. Interacts with XPA; the interaction is direct and associates XPA with the RPA complex. Interacts with ETAA1; the interaction is direct and promotes ETAA1 recruitment at stalled replication forks. Interacts with RPA1; this interaction associates HROB with the RPA complex. Interacts (when poly-ADP-ribosylated) with HTATSF1. In terms of processing, DNA damage-induced 'Lys-63'-linked polyubiquitination by PRPF19 mediates ATRIP recruitment to the RPA complex at sites of DNA damage and activation of ATR. Ubiquitinated by RFWD3 at stalled replication forks in response to DNA damage: ubiquitination by RFWD3 does not lead to degradation by the proteasome and promotes removal of the RPA complex from stalled replication forks, promoting homologous recombination. Sumoylated on lysine residues Lys-458 and Lys-586, with Lys-458 being the major site. Sumoylation promotes recruitment of RAD51 to the DNA damage foci to initiate DNA repair through homologous recombination. Desumoylated by SENP6. Post-translationally, poly-ADP-ribosylated by PARP1; promoting recruitment of HTATSF1.

The protein localises to the nucleus. The protein resides in the PML body. As part of the heterotrimeric replication protein A complex (RPA/RP-A), binds and stabilizes single-stranded DNA intermediates, that form during DNA replication or upon DNA stress. It prevents their reannealing and in parallel, recruits and activates different proteins and complexes involved in DNA metabolism. Thereby, it plays an essential role both in DNA replication and the cellular response to DNA damage. In the cellular response to DNA damage, the RPA complex controls DNA repair and DNA damage checkpoint activation. Through recruitment of ATRIP activates the ATR kinase a master regulator of the DNA damage response. It is required for the recruitment of the DNA double-strand break repair factors RAD51 and RAD52 to chromatin in response to DNA damage. Also recruits to sites of DNA damage proteins like XPA and XPG that are involved in nucleotide excision repair and is required for this mechanism of DNA repair. Also plays a role in base excision repair (BER) probably through interaction with UNG. Also recruits SMARCAL1/HARP, which is involved in replication fork restart, to sites of DNA damage. May also play a role in telomere maintenance. This chain is Replication protein A 70 kDa DNA-binding subunit (Rpa1), found in Mus musculus (Mouse).